The primary structure comprises 366 residues: Galactoside alpha-(1,2)-fucosyltransferase 1 (366 aa).

Topologically, residues 1-8 (MWPLSHRH) are cytoplasmic. A helical; Signal-anchor for type II membrane protein membrane pass occupies residues 9 to 25 (LCLAFLLVCVLSAISFF). Topologically, residues 26–366 (LHIHQDSFRH…LSPLWTLAEP (341 aa)) are lumenal. Residues Asn-66, Asn-302, and Asn-328 are each glycosylated (N-linked (GlcNAc...) asparagine).

The protein belongs to the glycosyltransferase 11 family.

It localises to the golgi apparatus. The protein localises to the golgi stack membrane. The catalysed reaction is a beta-D-galactosyl-(1-&gt;4)-N-acetyl-beta-D-glucosaminyl derivative + GDP-beta-L-fucose = an alpha-L-Fuc-(1-&gt;2)-beta-D-Gal-(1-&gt;4)-beta-D-GlcNAc derivative + GDP + H(+). It carries out the reaction a ganglioside GA1 + GDP-beta-L-fucose = a ganglioside Fuc-GA1 + GDP + H(+). It catalyses the reaction a beta-D-Gal-(1-&gt;3)-beta-D-GlcNAc-(1-&gt;3)-beta-D-Gal-(1-&gt;4)-beta-D-Glc-(1&lt;-&gt;1')-Cer(d18:1(4E)) + GDP-beta-L-fucose = alpha-L-fucosyl-(1-&gt;2)- beta-D-galactosyl-(1-&gt;3)-N-acetyl-beta-D-glucosaminyl-(1-&gt;3)-beta-D-galactosyl-(1-&gt;4)-beta-D-glucosyl-(1&lt;-&gt;1')-N-acylsphing-4-enine + GDP + H(+). The enzyme catalyses a neolactoside nLc4Cer(d18:1(4E)) + GDP-beta-L-fucose = a neolactoside IV(2)-alpha-Fuc-nLc4Cer(d18:1(4E)) + GDP + H(+). The catalysed reaction is a ganglioside GM1 + GDP-beta-L-fucose = a ganglioside Fuc-GM1 + GDP + H(+). It carries out the reaction beta-D-galactosyl-(1-&gt;3)-N-acetyl-D-galactosamine + GDP-beta-L-fucose = alpha-L-fucosyl-(1-&gt;2)-beta-D-galactosyl-(1-&gt;3)-N-acetyl-D-galactosamine + GDP + H(+). The protein operates within protein modification; protein glycosylation. Catalyzes the transfer of L-fucose, from a guanosine diphosphate-beta-L-fucose, to the terminal galactose residue of glycoconjugates through an alpha(1,2) linkage leading to H antigen synthesis that is an intermediate substrate in the synthesis of ABO blood group antigens. H antigen is essential for maturation of the glomerular layer of the main olfactory bulb, in cell migration and early cell-cell contacts during tumor associated angiogenesis. Preferentially fucosylates soluble lactose and to a lesser extent fucosylates glycolipids gangliosides GA1 and GM1a. This Plecturocebus brunneus (Brown titi monkey) protein is Galactoside alpha-(1,2)-fucosyltransferase 1.